We begin with the raw amino-acid sequence, 470 residues long: E3 ubiquitin-protein ligase TRIM21 (470 aa).

An RING-type zinc finger spans residues 20 to 59 (CSICLDPMVEPMSIECGHCFCKECIFEVGKNGGSSCPECR). Residues cysteine 96, histidine 99, cysteine 118, and histidine 124 each contribute to the Zn(2+) site. Residues 96–127 (CMKHGEKLHLFCEEDGQALCWVCAQSGKHRDH) form a B box-type zinc finger. The stretch at 188 to 250 (LQNSLLAQEE…RGSELELLQE (63 aa)) forms a coiled coil. Positions 272 to 470 (DLTSTCPVPG…APLKLCPLKM (199 aa)) constitute a B30.2/SPRY domain.

Belongs to the TRIM/RBCC family. As to quaternary structure, homotrimer. Component of a SCF(SKP2)-like complex containing CUL1, SKP1, TRIM21 and SKP2. Interacts with CALR, CUL1, FBXW11, HSPA5, IKBKB, IRF3, SKP1 and VCP. Interacts with SKP2; the interaction with SKP2 does not depend on an intact F-box domain. Interacts (via N-terminus and C-terminus) with DCP2 (via N-terminus and C-terminus). Interacts (via C-terminus) with IRF8 (via C-terminus). Interacts with ULK1, BECN1 and with ATG8 family members, including GABARAP, GABARAPL1, GABARAPL2 and MAP1LC3C/LC3C. Interacts with TRIM21 and SQSTM1/sequestosome 1. Interacts with IRF3. Interacts (via the SPRY domain) with NMI (via coiled-coil domain); the interaction promotes 'Lys-63'-linked ubiquitination of NMI. Interacts with IFI35 and NMI; the interaction facilitates NMI-IFI35 complex formation. Autoubiquitinated; does not lead to its proteasomal degradation. Deubiquitinated by USP4; leading to its stabilization. Autoubiquitinated.

The protein resides in the cytoplasm. The protein localises to the cytoplasmic vesicle. It is found in the autophagosome. Its subcellular location is the nucleus. It localises to the P-body. The protein resides in the stress granule. The catalysed reaction is S-ubiquitinyl-[E2 ubiquitin-conjugating enzyme]-L-cysteine + [acceptor protein]-L-lysine = [E2 ubiquitin-conjugating enzyme]-L-cysteine + N(6)-ubiquitinyl-[acceptor protein]-L-lysine.. The protein operates within protein modification; protein ubiquitination. Functionally, E3 ubiquitin-protein ligase whose activity is dependent on E2 enzymes, UBE2D1, UBE2D2, UBE2E1 and UBE2E2. Forms a ubiquitin ligase complex in cooperation with the E2 UBE2D2 that is used not only for the ubiquitination of USP4 and IKBKB but also for its self-ubiquitination. Component of cullin-RING-based SCF (SKP1-CUL1-F-box protein) E3 ubiquitin-protein ligase complexes such as SCF(SKP2)-like complexes. A TRIM21-containing SCF(SKP2)-like complex is shown to mediate ubiquitination of CDKN1B ('Thr-187' phosphorylated-form), thereby promoting its degradation by the proteasome. Monoubiquitinates IKBKB that will negatively regulates Tax-induced NF-kappa-B signaling. Negatively regulates IFN-beta production post-pathogen recognition by catalyzing polyubiquitin-mediated degradation of IRF3. Mediates the ubiquitin-mediated proteasomal degradation of IgG1 heavy chain, which is linked to the VCP-mediated ER-associated degradation (ERAD) pathway. Promotes IRF8 ubiquitination, which enhanced the ability of IRF8 to stimulate cytokine genes transcription in macrophages. Plays a role in the regulation of the cell cycle progression. Enhances the decapping activity of DCP2. Exists as a ribonucleoprotein particle present in all mammalian cells studied and composed of a single polypeptide and one of four small RNA molecules. At least two isoforms are present in nucleated and red blood cells, and tissue specific differences in RO/SSA proteins have been identified. The common feature of these proteins is their ability to bind HY RNAs.2. Involved in the regulation of innate immunity and the inflammatory response in response to IFNG/IFN-gamma. Organizes autophagic machinery by serving as a platform for the assembly of ULK1, Beclin 1/BECN1 and ATG8 family members and recognizes specific autophagy targets, thus coordinating target recognition with assembly of the autophagic apparatus and initiation of autophagy. Also regulates autophagy through FIP200/RB1CC1 ubiquitination and subsequent decreased protein stability. Represses the innate antiviral response by facilitating the formation of the NMI-IFI35 complex through 'Lys-63'-linked ubiquitination of NMI. During viral infection, promotes cell pyroptosis by mediating 'Lys-6'-linked ubiquitination of ISG12a/IFI27, facilitating its translocation into the mitochondria and subsequent CASP3 activation. When up-regulated through the IFN/JAK/STAT signaling pathway, promotes 'Lys-27'-linked ubiquitination of MAVS, leading to the recruitment of TBK1 and up-regulation of innate immunity. Mediates 'Lys-63'-linked polyubiquitination of G3BP1 in response to heat shock, leading to stress granule disassembly. The protein is E3 ubiquitin-protein ligase TRIM21 (Trim21) of Mus musculus (Mouse).